A 63-amino-acid polypeptide reads, in one-letter code: Large ribosomal subunit protein uL30 (63 aa).

Belongs to the universal ribosomal protein uL30 family. As to quaternary structure, part of the 50S ribosomal subunit.

The protein is Large ribosomal subunit protein uL30 of Granulibacter bethesdensis (strain ATCC BAA-1260 / CGDNIH1).